A 263-amino-acid chain; its full sequence is 4-hydroxy-tetrahydrodipicolinate reductase (263 aa).

Residues 7–12 (GASGRM) and Asp-33 each bind NAD(+). Arg-34 provides a ligand contact to NADP(+). Residues 96 to 98 (GTT) and 120 to 123 (APNM) each bind NAD(+). Catalysis depends on His-153, which acts as the Proton donor/acceptor. His-154 provides a ligand contact to (S)-2,3,4,5-tetrahydrodipicolinate. The active-site Proton donor is the Lys-157. (S)-2,3,4,5-tetrahydrodipicolinate is bound at residue 163–164 (GT).

The protein belongs to the DapB family.

It localises to the cytoplasm. It carries out the reaction (S)-2,3,4,5-tetrahydrodipicolinate + NAD(+) + H2O = (2S,4S)-4-hydroxy-2,3,4,5-tetrahydrodipicolinate + NADH + H(+). The catalysed reaction is (S)-2,3,4,5-tetrahydrodipicolinate + NADP(+) + H2O = (2S,4S)-4-hydroxy-2,3,4,5-tetrahydrodipicolinate + NADPH + H(+). It participates in amino-acid biosynthesis; L-lysine biosynthesis via DAP pathway; (S)-tetrahydrodipicolinate from L-aspartate: step 4/4. In terms of biological role, catalyzes the conversion of 4-hydroxy-tetrahydrodipicolinate (HTPA) to tetrahydrodipicolinate. In Ralstonia pickettii (strain 12J), this protein is 4-hydroxy-tetrahydrodipicolinate reductase.